A 45-amino-acid chain; its full sequence is Large ribosomal subunit protein bL34 (45 aa).

The tract at residues 1–45 (MTKRTFGGTSRKRKRVSGFRVRMRTHTGRSVIRSRRKKGRSRIAV) is disordered. Positions 10–45 (SRKRKRVSGFRVRMRTHTGRSVIRSRRKKGRSRIAV) are enriched in basic residues.

It belongs to the bacterial ribosomal protein bL34 family.

This is Large ribosomal subunit protein bL34 from Prochlorococcus marinus (strain SARG / CCMP1375 / SS120).